The primary structure comprises 493 residues: Glutamyl-tRNA(Gln) amidotransferase subunit A (493 aa).

Active-site charge relay system residues include lysine 79 and serine 159. Residue serine 183 is the Acyl-ester intermediate of the active site.

It belongs to the amidase family. GatA subfamily. In terms of assembly, heterotrimer of A, B and C subunits.

The catalysed reaction is L-glutamyl-tRNA(Gln) + L-glutamine + ATP + H2O = L-glutaminyl-tRNA(Gln) + L-glutamate + ADP + phosphate + H(+). Functionally, allows the formation of correctly charged Gln-tRNA(Gln) through the transamidation of misacylated Glu-tRNA(Gln) in organisms which lack glutaminyl-tRNA synthetase. The reaction takes place in the presence of glutamine and ATP through an activated gamma-phospho-Glu-tRNA(Gln). The protein is Glutamyl-tRNA(Gln) amidotransferase subunit A of Rhizobium etli (strain ATCC 51251 / DSM 11541 / JCM 21823 / NBRC 15573 / CFN 42).